Consider the following 486-residue polypeptide: Ribosome biogenesis protein YTM1 (486 aa).

Residues 12 to 99 are ubiquitin-like (UBL) domain; that stretch reads RQLPINLFTR…ESQIDVEYVR (88 aa). WD repeat units follow at residues 212–251, 305–345, 349–388, 392–432, and 454–486; these read GHTGPISSVIASSSGKEIVTGSWDGNINLYVLPDAEPTEH, GHTG…AGAL, PFDKSALCVDQWKMNGTLATGNMDRTICLWDTRQATSLIS, PTTS…TALF, and VLGERLLAVDWNGEVLVAGGEDGEVGIWRARGE. Positions 249-299 are disordered; sequence TEHQVPADPVSYLPGQGTKKRRKLEKDQEKAPIEGLTDGDATGEGGWRRAP.

Belongs to the WD repeat WDR12/YTM1 family. As to quaternary structure, component of the NOP7 complex, composed of ERB1, NOP7 and YTM1. The complex is held together by ERB1, which interacts with NOP7 via its N-terminal domain and with YTM1 via a high-affinity interaction between the seven-bladed beta-propeller domains of the 2 proteins. The NOP7 complex associates with the 66S pre-ribosome. Interacts (via UBL domain) with MDN1 (via VWFA/MIDAS domain).

It is found in the nucleus. Its subcellular location is the nucleolus. The protein resides in the nucleoplasm. Component of the NOP7 complex, which is required for maturation of the 25S and 5.8S ribosomal RNAs and formation of the 60S ribosome. The protein is Ribosome biogenesis protein YTM1 of Cryptococcus neoformans var. neoformans serotype D (strain B-3501A) (Filobasidiella neoformans).